Here is a 967-residue protein sequence, read N- to C-terminus: Vitamin B12-dependent ribonucleotide reductase (967 aa).

Residues 1-23 (MTETASGPARSSRAKGTKAGKGL) are disordered. Substrate is bound by residues serine 143, 159 to 160 (AC), glycine 188, 364 to 368 (NPCSE), and 554 to 558 (PTGTI). The cysteines at positions 160 and 377 are disulfide-linked. The active-site Proton acceptor is asparagine 364. Cysteine 366 serves as the catalytic Cysteine radical intermediate. Glutamate 368 functions as the Proton acceptor in the catalytic mechanism.

The protein belongs to the ribonucleoside diphosphate reductase class-2 family. Adenosylcob(III)alamin serves as cofactor.

The enzyme catalyses a 2'-deoxyribonucleoside 5'-diphosphate + [thioredoxin]-disulfide + H2O = a ribonucleoside 5'-diphosphate + [thioredoxin]-dithiol. In terms of biological role, catalyzes the reduction of ribonucleotides to deoxyribonucleotides. May function to provide a pool of deoxyribonucleotide precursors for DNA repair during oxygen limitation and/or for immediate growth after restoration of oxygen. This Streptomyces coelicolor (strain ATCC BAA-471 / A3(2) / M145) protein is Vitamin B12-dependent ribonucleotide reductase (nrdJ).